A 379-amino-acid chain; its full sequence is Cobalt-precorrin-5B C(1)-methyltransferase (379 aa).

Belongs to the CbiD family.

It catalyses the reaction Co-precorrin-5B + S-adenosyl-L-methionine = Co-precorrin-6A + S-adenosyl-L-homocysteine. It functions in the pathway cofactor biosynthesis; adenosylcobalamin biosynthesis; cob(II)yrinate a,c-diamide from sirohydrochlorin (anaerobic route): step 6/10. Its function is as follows. Catalyzes the methylation of C-1 in cobalt-precorrin-5B to form cobalt-precorrin-6A. The chain is Cobalt-precorrin-5B C(1)-methyltransferase from Citrobacter koseri (strain ATCC BAA-895 / CDC 4225-83 / SGSC4696).